The chain runs to 320 residues: Dual oxidase maturation factor 2 (320 aa).

The Extracellular portion of the chain corresponds to 1-21; sequence MTLWNGVLPFYPQPRHAAGFS. The chain crosses the membrane as a helical span at residues 22-42; the sequence is VPLLIVILVFLALAASFLLIL. Topologically, residues 43–56 are cytoplasmic; that stretch reads PGIRGHSRWFWLVR. Residues 57 to 77 traverse the membrane as a helical segment; the sequence is VLLSLFIGAEIVAVHFSAEWF. Residues 78-183 are Extracellular-facing; the sequence is VGTVNTNTSY…HLAGHYASAT (106 aa). Residues asparagine 84, asparagine 109, and asparagine 121 are each glycosylated (N-linked (GlcNAc...) asparagine). Residues 184–204 form a helical membrane-spanning segment; it reads LWVAFCFWLLSNVLLSTPAPL. The Cytoplasmic portion of the chain corresponds to 205–206; sequence YG. Residues 207-227 form a helical membrane-spanning segment; that stretch reads GLALLTTGAFALFGVFALASI. Residues 228–247 lie on the Extracellular side of the membrane; it reads SSVPLCPLRLGSSALTTQYG. Residues 248 to 268 traverse the membrane as a helical segment; the sequence is AAFWVTLATGVLCLFLGGAVV. The Cytoplasmic portion of the chain corresponds to 269-320; that stretch reads SLQYVRPSALRTLLDQSAKDCSQERGGSPLILGDPLHKQAALPDLKCITTNL.

Belongs to the DUOXA family. As to quaternary structure, heterodimer with DUXA2; disulfide-linked. Interacts with CSNK1G2. Post-translationally, N-glycosylated. In terms of tissue distribution, specifically expressed in thyroid. Also detected in salivary glands.

Its subcellular location is the endoplasmic reticulum membrane. Functionally, required for the maturation and the transport from the endoplasmic reticulum to the plasma membrane of functional DUOX2. May play a role in thyroid hormone synthesis. This Homo sapiens (Human) protein is Dual oxidase maturation factor 2 (DUOXA2).